The primary structure comprises 320 residues: Malate dehydrogenase (320 aa).

Residues G10–G15 and D34 each bind NAD(+). Substrate-binding residues include R83 and R89. NAD(+) is bound by residues N96 and I119–N121. Substrate contacts are provided by N121 and R152. Catalysis depends on H176, which acts as the Proton acceptor.

This sequence belongs to the LDH/MDH superfamily. MDH type 3 family.

It catalyses the reaction (S)-malate + NAD(+) = oxaloacetate + NADH + H(+). Its function is as follows. Catalyzes the reversible oxidation of malate to oxaloacetate. This is Malate dehydrogenase from Methylobacterium nodulans (strain LMG 21967 / CNCM I-2342 / ORS 2060).